The primary structure comprises 165 residues: Growth arrest and DNA damage-inducible protein GADD45 alpha (165 aa).

A Phosphothreonine modification is found at T2.

Belongs to the GADD45 family. In terms of assembly, interacts with AURKA, GADD45GIP1 and PCNA. Interacts with MAPK14.

The protein localises to the nucleus. In terms of biological role, might affect PCNA interaction with some CDK (cell division protein kinase) complexes; stimulates DNA excision repair in vitro and inhibits entry of cells into S phase. In T-cells, functions as a regulator of p38 MAPKs by inhibiting p88 phosphorylation and activity. This chain is Growth arrest and DNA damage-inducible protein GADD45 alpha (Gadd45a), found in Mus musculus (Mouse).